A 407-amino-acid chain; its full sequence is Protein ZNF365 (407 aa).

Ser16 carries the post-translational modification Phosphoserine. Residues 26 to 51 form a C2H2-type; degenerate zinc finger; it reads LRCPRCGDHTRFRSLSSLRAHLEFSH. Ser138 carries the post-translational modification Phosphoserine. The stretch at 169-297 forms a coiled coil; that stretch reads VEAVDRTIEK…QLEYYQSQQA (129 aa). Phosphothreonine is present on Thr175. Residues 347-392 form a disordered region; that stretch reads LKKAKDDRASMQPAKAIHEQAESSRDLCRPPKKGELLGFGRKGNIR. Positions 362-381 are enriched in basic and acidic residues; it reads AIHEQAESSRDLCRPPKKGE. Ser369 carries the phosphoserine modification.

Homodimer. Interacts with NDE1 and NDEL1. Does not interact with TUBG1. Interacts with DISC1. Interacts with PARP1. Interacts with MCRS1. In terms of tissue distribution, isoform 1 is expressed in brain. Isoform 2 is expressed in placenta and at low level in lung and liver. Isoform 3 is expressed in kidney and pancreas. Isoform 1 is expressed exclusively in brain.

Its subcellular location is the cytoplasm. The protein resides in the cytoskeleton. The protein localises to the microtubule organizing center. It is found in the centrosome. In terms of biological role, involved in the regulation of neurogenesis. Negatively regulates neurite outgrowth. Involved in the morphogenesis of basket cells in the somatosensory cortex during embryogenesis. Involved in the positive regulation of oligodendrocyte differentiation during postnatal growth. Involved in dendritic arborization, morphogenesis of spine density dendrite, and establishment of postsynaptic dendrite density in cortical pyramidal neurons. Involved in homologous recombination (HR) repair pathway. Required for proper resolution of DNA double-strand breaks (DSBs) by HR. Is required for recovery of stalled replication forks, and directly contributes to genomic stability. Interacts with PARP1 and mediates MRE11-dependent DNA end resection during replication fork recovery. Contributes to genomic stability by preventing telomere dysfunction. This Homo sapiens (Human) protein is Protein ZNF365 (ZNF365).